Reading from the N-terminus, the 747-residue chain is Meprin A subunit alpha (747 aa).

The signal sequence occupies residues 1–20; the sequence is MLWIQPACLLSLIFSAHIAA. Residues 21–64 constitute a propeptide that is removed on maturation; that stretch reads VSIKHLLNGSDHDTDVGEQKDIFEINLAAGLNLFQGDILLPRTR. 2 N-linked (GlcNAc...) asparagine glycosylation sites follow: Asn-28 and Asn-139. The 195-residue stretch at 65-259 folds into the Peptidase M12A domain; the sequence is NAMRDPSSRW…IRLNRMYNCT (195 aa). The Extracellular portion of the chain corresponds to 65 to 713; it reads NAMRDPSSRW…FYAGERCQAM (649 aa). Disulfide bonds link Cys-106–Cys-258, Cys-127–Cys-146, and Cys-268–Cys-430. His-154 lines the Zn(2+) pocket. The active site involves Glu-155. Zn(2+) is bound by residues His-158 and His-164. N-linked (GlcNAc...) asparagine glycosylation is found at Asn-221, Asn-257, Asn-317, Asn-413, Asn-439, Asn-533, and Asn-540. One can recognise an MAM domain in the interval 263-432; sequence TLLDHCDFEK…ITLTETPCPA (170 aa). Residues 433 to 594 enclose the MATH domain; that stretch reads GVWTIRNISQ…GDSLIIFVDF (162 aa). The interval 638-663 is disordered; it reads ESLPSSLGQRHPSRQKRSVENTGPME. Residues 671–711 enclose the EGF-like domain; sequence FRDPCDPNPCQNEGTCVNVKGMASCRCVSGHAFFYAGERCQ. 3 disulfides stabilise this stretch: Cys-675–Cys-686, Cys-680–Cys-695, and Cys-697–Cys-710. Residues 714–741 form a helical membrane-spanning segment; that stretch reads HVHGSLLGLLIGCIAGLIFLTFVTFSTT. Over 742 to 747 the chain is Cytoplasmic; that stretch reads NGKLRQ.

As to quaternary structure, homotetramer consisting of disulfide-linked alpha subunits, homooligomer consisting of disulfide-linked alpha subunit homodimers, or heterotetramer of two alpha and two beta subunits formed by non-covalent association of two disulfide-linked heterodimers. Genetic factors determine which oligomer(s) will be formed (strain-specific). Interacts with MBL2 through its carbohydrate moiety. This interaction may inhibit its catalytic activity. Zn(2+) is required as a cofactor. Post-translationally, N-glycosylated; contains GlcNAc, galactose, mannose and a small amount of fucose. Kidney, intestinal brush borders and salivary ducts.

The protein localises to the membrane. It catalyses the reaction Hydrolysis of protein and peptide substrates preferentially on carboxyl side of hydrophobic residues.. Its activity is regulated as follows. Inhibited by metal ion chelators EDTA and 1,10-phenanthroline, bradykinin analogs, cysteine, CONA65, and several hydroxamate compounds, particularly tyrosine hydroxamate. Not inhibited by 3,4-dichloroisocourmarin, soybean trypsin inhibitor, or the cysteine proteinase inhibitors iodoacetic acid and E-64. In Mus musculus (Mouse), this protein is Meprin A subunit alpha (Mep1a).